Consider the following 339-residue polypeptide: MGEKALPVVYKRYICSFADCGASYNKNWKLRAHLCKHTGEKPFPCKEEGCDKGFTSLHHLTRHSITHTGEKNFKCDSDKCDLTFTTKANMKKHFNRFHNLQLCVYVCHFEGCDKAFKKHNQLKVHQFTHTQQLPYKCPHEGCDKSFSVPSCLKRHEKVHAGYPCKKDDSCLFVGKTWTLYLKHVKECHQEPVMCDECKRTFKHKDYLRNHKKTHKKERTVYCCPRDGCERSYTTEFNLQSHMQSFHEEQRPFACEHAECGKSFAMKKSLERHSVVHDPEKRKLKEKCPRPKRSLASRLSGCAPPKSKEKSAAKATEKTGSVVKNKPSGTETKGSLVIEK.

9 C2H2-type zinc fingers span residues 13–37, 43–67, 73–98, 105–129, 135–159, 162–188, 192–214, 221–246, and 252–276; these read YICS…LCKH, FPCK…SITH, FKCD…NRFH, YVCH…QFTH, YKCP…EKVH, YPCK…KECH, VMCD…KKTH, YCCP…QSFH, and FACE…SVVH. Composition is skewed to basic and acidic residues over residues 275-288 and 305-316; these read VHDP…EKCP and KSKEKSAAKATE. The segment at 275–339 is disordered; that stretch reads VHDPEKRKLK…ETKGSLVIEK (65 aa).

As to expression, synthesized in oocytes and, in much lower levels, in somatic cells.

Its subcellular location is the nucleus. Its function is as follows. Involved in ribosomal large subunit biogenesis. Interacts with the internal control region (ICR) of approximately 50 bases within the 5S RNA genes, is required for correct transcription of these genes by RNA polymerase III. Also binds the transcribed 5S RNA's. This chain is Transcription factor IIIA (gtf3a), found in Xenopus borealis (Kenyan clawed frog).